Here is a 512-residue protein sequence, read N- to C-terminus: Cytochrome P450 84A4 (512 aa).

The helical transmembrane segment at 7 to 24 threads the bilayer; it reads LIVLVPLLLFLFPHLLLR. Residue Cys-447 participates in heme binding.

The protein belongs to the cytochrome P450 family. Requires heme as cofactor. Expressed in seedlings, roots, stems and inflorescence nodes. Low or no expression in leaves, flowers, seeds and lignifying tissue.

The protein resides in the membrane. In terms of biological role, cytochrome P450 involved in the production of catechol-substituted substrates needed for the arabidopyrones biosynthesis. Converts p-coumaraldehyde into caffealdehyde. This chain is Cytochrome P450 84A4 (CYP84A4), found in Arabidopsis thaliana (Mouse-ear cress).